An 82-amino-acid polypeptide reads, in one-letter code: RNA-binding protein Hfq (82 aa).

The region spanning D10–V70 is the Sm domain.

The protein belongs to the Hfq family. As to quaternary structure, homohexamer.

RNA chaperone that binds small regulatory RNA (sRNAs) and mRNAs to facilitate mRNA translational regulation in response to envelope stress, environmental stress and changes in metabolite concentrations. Also binds with high specificity to tRNAs. This is RNA-binding protein Hfq from Chelativorans sp. (strain BNC1).